The following is a 570-amino-acid chain: Biotin biosynthesis bifunctional protein BioHC (570 aa).

The tract at residues 1-29 (MTEVNVRAAATPEEKPFLNRTRHEPANPQ) is disordered. A carboxylesterase region spans residues 1 to 279 (MTEVNVRAAA…HISHPREVAT (279 aa)). The span at 12–25 (PEEKPFLNRTRHEP) shows a compositional bias: basic and acidic residues. Substrate-binding positions include Trp-41, 105–106 (SL), and 175–179 (FIALQ). The active-site Nucleophile is the Ser-105. Residues Asp-239 and His-267 contribute to the active site. A substrate-binding site is contributed by His-267. Residues 280–570 (MINSFLRQQA…RKPLDESASA (291 aa)) form a malonyl-ACP O-methyltransferase region.

In the N-terminal section; belongs to the AB hydrolase superfamily. Carboxylesterase BioH family. This sequence in the C-terminal section; belongs to the methyltransferase superfamily.

It carries out the reaction a carboxylic ester + H2O = an alcohol + a carboxylate + H(+). The enzyme catalyses malonyl-[ACP] + S-adenosyl-L-methionine = malonyl-[ACP] methyl ester + S-adenosyl-L-homocysteine. It participates in cofactor biosynthesis; biotin biosynthesis. In terms of biological role, converts the free carboxyl group of a malonyl-thioester to its methyl ester by transfer of a methyl group from S-adenosyl-L-methionine (SAM). It allows to synthesize pimeloyl-ACP via the fatty acid synthetic pathway. The physiological role of BioH is to remove the methyl group introduced by BioC when the pimeloyl moiety is complete. It allows to synthesize pimeloyl-ACP via the fatty acid synthetic pathway through the hydrolysis of the ester bonds of pimeloyl-ACP esters. This is Biotin biosynthesis bifunctional protein BioHC (bioC) from Teredinibacter turnerae (strain ATCC 39867 / T7901).